Here is a 115-residue protein sequence, read N- to C-terminus: T-cell receptor gamma chain V region V108B (115 aa).

An N-terminal signal peptide occupies residues 1–18 (MLLLRWPTFCCLWVFGLG). Residues 19–115 (QLEQTELSVT…EATYYCAVWI (97 aa)) are v segment.

The chain is T-cell receptor gamma chain V region V108B (Tcrg-V1) from Mus musculus (Mouse).